Here is a 288-residue protein sequence, read N- to C-terminus: ATP synthase gamma chain (288 aa).

It belongs to the ATPase gamma chain family. In terms of assembly, F-type ATPases have 2 components, CF(1) - the catalytic core - and CF(0) - the membrane proton channel. CF(1) has five subunits: alpha(3), beta(3), gamma(1), delta(1), epsilon(1). CF(0) has three main subunits: a, b and c.

The protein localises to the cell inner membrane. In terms of biological role, produces ATP from ADP in the presence of a proton gradient across the membrane. The gamma chain is believed to be important in regulating ATPase activity and the flow of protons through the CF(0) complex. The protein is ATP synthase gamma chain of Vibrio cholerae serotype O1 (strain ATCC 39541 / Classical Ogawa 395 / O395).